The following is a 173-amino-acid chain: Mesencephalic astrocyte-derived neurotrophic factor homolog (173 aa).

An N-terminal signal peptide occupies residues 1–22 (MKTWHMVVVIGFLATLAQTSLA). Cystine bridges form between cysteine 28/cysteine 114, cysteine 31/cysteine 103, cysteine 61/cysteine 72, and cysteine 148/cysteine 151.

The protein belongs to the ARMET family.

It localises to the secreted. Required during the maturation of the embryonic nervous system for maintenance of neuronal and cuticular connectivity. Essential for maintenance of dopaminergic neurons and dopamine levels. The chain is Mesencephalic astrocyte-derived neurotrophic factor homolog from Drosophila sechellia (Fruit fly).